The sequence spans 939 residues: Isoleucine--tRNA ligase (939 aa).

A 'HIGH' region motif is present at residues 57–67; that stretch reads PYANGHIHLGH. Glu-561 contacts L-isoleucyl-5'-AMP. The short motif at 602-606 is the 'KMSKS' region element; sequence KMSKS. Residue Lys-605 coordinates ATP. The Zn(2+) site is built by Cys-903, Cys-906, Cys-923, and Cys-926.

It belongs to the class-I aminoacyl-tRNA synthetase family. IleS type 1 subfamily. In terms of assembly, monomer. Zn(2+) serves as cofactor.

The protein localises to the cytoplasm. It carries out the reaction tRNA(Ile) + L-isoleucine + ATP = L-isoleucyl-tRNA(Ile) + AMP + diphosphate. In terms of biological role, catalyzes the attachment of isoleucine to tRNA(Ile). As IleRS can inadvertently accommodate and process structurally similar amino acids such as valine, to avoid such errors it has two additional distinct tRNA(Ile)-dependent editing activities. One activity is designated as 'pretransfer' editing and involves the hydrolysis of activated Val-AMP. The other activity is designated 'posttransfer' editing and involves deacylation of mischarged Val-tRNA(Ile). The sequence is that of Isoleucine--tRNA ligase from Desulfotalea psychrophila (strain LSv54 / DSM 12343).